A 68-amino-acid polypeptide reads, in one-letter code: Pantinin-3 (68 aa).

The N-terminal stretch at 1–23 (MKTQFAILLIALVLFQLLSQSDA) is a signal peptide. Position 36 is a leucine amide (Leu-36). A propeptide spanning residues 40 to 68 (GLNELDNLDELFDGEISQADIDFLKELMS) is cleaved from the precursor.

This sequence belongs to the non-disulfide-bridged peptide (NDBP) superfamily. Short antimicrobial peptide (group 4) family. In terms of tissue distribution, expressed by the venom gland.

The protein localises to the secreted. Its subcellular location is the target cell membrane. Its function is as follows. Amphipathic peptide that possesses relatively strong activities against Gram-positive bacteria and a fungus, but has very weak antimicrobial activities against Gram-negative bacteria. Also exhibits mild hemolytic activities against human erythrocytes (16 uM induce 70% of hemolysis). Furthermore, this peptide potently inhibits the growth of vancomycin-resistant Enterococcus (VRE) S13, a pathogen that can cause a number of human infections. Minimal inhibitory concentration (MIC) are the following: 16 uM against S.aureus, 6 uM against B.magaterium, 8 uM against M.luteus, 4 uM against VRE, 12 uM against methicillin-resistant S.aureus, 36 uM against E.coli, &gt;87 uM against P.putida, 87 uM against K.oxytoca, &gt;87 uM against E.cloacae, 84 uM against S.enterica and 17 uM against the fungus C.tropicalis. This Pandinus imperator (Emperor scorpion) protein is Pantinin-3.